Reading from the N-terminus, the 198-residue chain is Chorion protein S19 (198 aa).

The signal sequence occupies residues 1–16 (MNKFATLAVFISVCLA).

Belongs to the chorion protein S19 family.

It is found in the secreted. Functionally, chorion membrane (egg shell) protein; plays a role in protecting the egg from the environment. This chain is Chorion protein S19 (Cp19), found in Drosophila virilis (Fruit fly).